A 175-amino-acid polypeptide reads, in one-letter code: Gamma-crystallin B (175 aa).

2 Beta/gamma crystallin 'Greek key' domains span residues 2-40 and 41-83; these read GKIT…RVDS and GCWM…RLIP. Residues 84 to 88 are connecting peptide; it reads QHSGT. Beta/gamma crystallin 'Greek key' domains lie at 89-129 and 130-172; these read YRMR…NVME and GCWV…RRVM.

Belongs to the beta/gamma-crystallin family.

Crystallins are the dominant structural components of the vertebrate eye lens. The sequence is that of Gamma-crystallin B (Crygb) from Rattus norvegicus (Rat).